The following is an 807-amino-acid chain: Sucrose synthase 1 (807 aa).

Residues 272 to 748 form a GT-B glycosyltransferase region; it reads MMFNVVILSP…GLKRIYEKYT (477 aa).

Belongs to the glycosyltransferase 1 family. Plant sucrose synthase subfamily. In terms of assembly, forms homotetramers. In endosperm it forms both homotetramers and heterotetramers with SS2, all three possible heterotetramers are formed. As to expression, highly expressed in developing endosperm and in roots and, at lower levels, in coleoptiles and aleurone. In 3 day old roots it is detected in cap cells and along the vascular strand, starting just after the meristemic region. In 9 day old leaves it is found in the phloem. In seeds it is distributed throughout the endosperm and also found in the assimilate-unloading tissues, the nucellar projection, the vascular area and at a high concentration in the chalazal region.

It catalyses the reaction an NDP-alpha-D-glucose + D-fructose = a ribonucleoside 5'-diphosphate + sucrose + H(+). Functionally, sucrose-cleaving enzyme that provides UDP-glucose and fructose for various metabolic pathways. The protein is Sucrose synthase 1 (SS1) of Hordeum vulgare (Barley).